Here is a 561-residue protein sequence, read N- to C-terminus: Mercuric reductase (561 aa).

An HMA domain is found at 1–65 (MTTLKITGMT…AVAGLGYEAT (65 aa)). Cysteine 11 and cysteine 14 together coordinate a metal cation. 3 residues coordinate FAD: alanine 110, glycine 130, and threonine 135. An intrachain disulfide couples cysteine 136 to cysteine 141. The FAD site is built by lysine 145, alanine 211, aspartate 403, and valine 411. Residues cysteine 558 and cysteine 559 each contribute to the Hg(2+) site.

The protein belongs to the class-I pyridine nucleotide-disulfide oxidoreductase family. In terms of assembly, homodimer. FAD serves as cofactor.

The catalysed reaction is Hg + NADP(+) + H(+) = Hg(2+) + NADPH. Its function is as follows. Resistance to Hg(2+) in bacteria appears to be governed by a specialized system which includes mercuric reductase. MerA protein is responsible for volatilizing mercury as Hg(0). The sequence is that of Mercuric reductase (merA) from Acinetobacter calcoaceticus.